Reading from the N-terminus, the 712-residue chain is Dynamin-1-like protein drp-1 (712 aa).

The 281-residue stretch at 24–304 (QIQLPQIVVV…LMHHIRNCLP (281 aa)) folds into the Dynamin-type G domain. The G1 motif stretch occupies residues 34–41 (GSQSAGKS). Residues 60–62 (VTR) are G2 motif. The segment at 148 to 151 (DLPG) is G3 motif. Positions 217–220 (TKLD) are G4 motif. The segment at 247-250 (VNRS) is G5 motif. The interval 280-502 (SRNGTPYLAK…LAYINTKHPE (223 aa)) is interaction with caspase ced-9. Positions 523-542 (GRSRNRHASTGERAVSAHGE) are disordered. The GED domain maps to 620–711 (VAIIERLIRN…IISEVRETQV (92 aa)).

The protein belongs to the TRAFAC class dynamin-like GTPase superfamily. Dynamin/Fzo/YdjA family. In terms of assembly, interacts (via residues 280-502) with caspase ced-9; the interaction is enhanced by GTP rather than GDP; the interaction is probably direct and may occur at the mitochondrion. In terms of tissue distribution, highly expressed in neurons, in intestinal cells and in the body wall, pharyngeal, and vulval muscles.

It localises to the mitochondrion. The protein resides in the mitochondrion outer membrane. It is found in the cytoplasm. Its subcellular location is the cytosol. It carries out the reaction GTP + H2O = GDP + phosphate + H(+). Its activity is regulated as follows. GTPase activity is increased by binding to phospholipid membranes. Functionally, functions in mitochondrial division. Functions in peroxisomal division. Mediates membrane fission, perhaps mainly of the mitochondrial outer membrane. Mitochondrial fission may be promoted by recruitment to mitochondrial membranes via the egl-1/ced-9 complex. Involved in the coordination of mitochondrial division with autophagy in response to acute heat stress during larval development. Plays a role in apoptosis by promoting mitochondrial elimination and cell-death execution, acting downstream of caspase ced-3, and perhaps independently of FIS1-related protein fis-2, caspase ced-9 and apoptosis-inducing factor AIFM/wah-1. Role in promoting apoptosis dependent upon cleavage of drp-1 by ced-3. Involved in negatively modulating longevity in concert with the Insulin/IGF-1-like signaling (IIS) mediated pathway. The chain is Dynamin-1-like protein drp-1 from Caenorhabditis elegans.